We begin with the raw amino-acid sequence, 185 residues long: Lipopolysaccharide export system protein LptA (185 aa).

Residues 1-27 (MKFKTNKLSLNLVLASSLLAASIPAFA) form the signal peptide. Residues 166 to 185 (PSQLQDKNNKGQTPAQKKGN) are disordered.

This sequence belongs to the LptA family. Component of the lipopolysaccharide transport and assembly complex.

The protein localises to the periplasm. Its function is as follows. Involved in the assembly of lipopolysaccharide (LPS). Required for the translocation of LPS from the inner membrane to the outer membrane. May form a bridge between the inner membrane and the outer membrane, via interactions with LptC and LptD, thereby facilitating LPS transfer across the periplasm. The chain is Lipopolysaccharide export system protein LptA from Escherichia coli O157:H7.